Reading from the N-terminus, the 373-residue chain is tRNA pseudouridine synthase Pus10 (373 aa).

D197 functions as the Nucleophile in the catalytic mechanism. Substrate contacts are provided by Y265 and Y336.

This sequence belongs to the pseudouridine synthase Pus10 family.

It carries out the reaction uridine(54) in tRNA = pseudouridine(54) in tRNA. The enzyme catalyses uridine(55) in tRNA = pseudouridine(55) in tRNA. Functionally, responsible for synthesis of pseudouridine from uracil-54 and uracil-55 in the psi GC loop of transfer RNAs. The protein is tRNA pseudouridine synthase Pus10 of Korarchaeum cryptofilum (strain OPF8).